The sequence spans 588 residues: Adenine deaminase (588 aa).

The protein belongs to the metallo-dependent hydrolases superfamily. Adenine deaminase family. In terms of assembly, homodimer. Mn(2+) is required as a cofactor.

The enzyme catalyses adenine + H2O + H(+) = hypoxanthine + NH4(+). This is Adenine deaminase from Escherichia coli O157:H7 (strain EC4115 / EHEC).